The primary structure comprises 257 residues: Triosephosphate isomerase (257 aa).

2 residues coordinate substrate: N11 and K13. Residue H96 is the Electrophile of the active site. The active-site Proton acceptor is E170.

This sequence belongs to the triosephosphate isomerase family. In terms of assembly, homodimer.

The protein localises to the cytoplasm. It catalyses the reaction D-glyceraldehyde 3-phosphate = dihydroxyacetone phosphate. The enzyme catalyses dihydroxyacetone phosphate = methylglyoxal + phosphate. Its pathway is carbohydrate biosynthesis; gluconeogenesis. It participates in carbohydrate degradation; glycolysis; D-glyceraldehyde 3-phosphate from glycerone phosphate: step 1/1. In terms of biological role, triosephosphate isomerase is an extremely efficient metabolic enzyme that catalyzes the interconversion between dihydroxyacetone phosphate (DHAP) and D-glyceraldehyde-3-phosphate (G3P) in glycolysis and gluconeogenesis. It is also responsible for the non-negligible production of methylglyoxal a reactive cytotoxic side-product that modifies and can alter proteins, DNA and lipids. The chain is Triosephosphate isomerase from Giardia intestinalis (Giardia lamblia).